The following is a 229-amino-acid chain: uncharacterized protein (229 aa).

The segment at M1–R102 is disordered. Over residues A73–A94 the composition is skewed to basic residues. A run of 2 helical transmembrane segments spans residues L137–L157 and L159–L179.

The protein localises to the cell membrane. This is an uncharacterized protein from Mycobacterium leprae (strain TN).